The following is a 610-amino-acid chain: Anthocyanin regulatory Lc protein (610 aa).

2 disordered regions span residues 402-422 and 468-524; these read ATGA…MSER and LESS…PVLT. The 50-residue stretch at 412 to 461 folds into the bHLH domain; the sequence is TGTKNHVMSERKRREKLNEMFLVLKSLLPSIHRVNKASILAETIAYLKEL. The span at 481–495 shows a compositional bias: polar residues; it reads TTTRLITRPSRGNNE. The segment covering 508–519 has biased composition (basic and acidic residues); that stretch reads KSPELGRDDVER.

It belongs to the bHLH protein family. As to quaternary structure, efficient DNA binding requires dimerization with another bHLH protein.

Its subcellular location is the nucleus. Its function is as follows. Putative transcriptional activator. Controls tissue-specific synthesis of anthocyanin pigments in various parts of the maize plant. The sequence is that of Anthocyanin regulatory Lc protein (LC) from Zea mays (Maize).